Here is a 420-residue protein sequence, read N- to C-terminus: 3-phosphoshikimate 1-carboxyvinyltransferase (420 aa).

The 3-phosphoshikimate site is built by Lys26, Ser27, and Arg31. Lys26 contributes to the phosphoenolpyruvate binding site. Phosphoenolpyruvate is bound by residues Gly97 and Arg125. Ser170, Ser171, Gln172, Asp297, Asn320, and Lys324 together coordinate 3-phosphoshikimate. Gln172 provides a ligand contact to phosphoenolpyruvate. The active-site Proton acceptor is Asp297. Phosphoenolpyruvate contacts are provided by Arg328, Arg375, and Lys400.

It belongs to the EPSP synthase family. Monomer.

The protein resides in the cytoplasm. It catalyses the reaction 3-phosphoshikimate + phosphoenolpyruvate = 5-O-(1-carboxyvinyl)-3-phosphoshikimate + phosphate. It participates in metabolic intermediate biosynthesis; chorismate biosynthesis; chorismate from D-erythrose 4-phosphate and phosphoenolpyruvate: step 6/7. Its function is as follows. Catalyzes the transfer of the enolpyruvyl moiety of phosphoenolpyruvate (PEP) to the 5-hydroxyl of shikimate-3-phosphate (S3P) to produce enolpyruvyl shikimate-3-phosphate and inorganic phosphate. The protein is 3-phosphoshikimate 1-carboxyvinyltransferase of Rhizobium etli (strain ATCC 51251 / DSM 11541 / JCM 21823 / NBRC 15573 / CFN 42).